The sequence spans 399 residues: Immunoglobulin heavy constant gamma 1 (399 aa).

Residues 1-21 (ASTKGPSVFPLAPSSKSTSGG) are disordered. Residues 1–98 (ASTKGPSVFP…PSNTKVDKKV (98 aa)) are CH1. Topologically, residues 1–350 (ASTKGPSVFP…DGELDGLWTT (350 aa)) are extracellular. Ig-like domains follow at residues 6 to 99 (PSVF…KKVE), 121 to 220 (PSVF…KTIS), and 229 to 325 (PQVY…KSLS). C27 and C83 are oxidised to a cystine. Residues 99-110 (EPKSCDKTHTCP) are hinge. Positions 111-223 (PCPAPELLGG…PIEKTISKAK (113 aa)) are CH2. Disulfide bonds link C144–C204 and C250–C308. N-linked (GlcNAc...) (complex) asparagine glycosylation is present at N180. Positions 224-330 (GQPREPQVYT…QKSLSLSPEL (107 aa)) are CH3. Residues 351–371 (ITIFITLFLLSVCYSATVTFF) traverse the membrane as a helical segment. Residues 372 to 399 (KVKWIFSSVVDLKQTIIPDYRNMIGQGA) are Cytoplasmic-facing.

In terms of assembly, immunoglobulins are composed of two identical heavy chains and two identical light chains; disulfide-linked. Interacts with FCGR1A; this interaction mediates IgG effector functions on monocytes. Interacts with FCGR2A and FCGR3A. Glycosylation on Asn-180 is required for interaction with Fc receptors and ability to activate the complement pathway. In terms of processing, (Microbial infection) Deglycosylation on Asn-180 by S.pyogenes EndoS or Endos2 endoglucosidases prevents interaction between immunoglobulin-gamma (IgG) and Fc receptors, impairing ability to activate the complement pathway.

It localises to the secreted. Its subcellular location is the cell membrane. Constant region of immunoglobulin heavy chains. Immunoglobulins, also known as antibodies, are membrane-bound or secreted glycoproteins produced by B lymphocytes. In the recognition phase of humoral immunity, the membrane-bound immunoglobulins serve as receptors which, upon binding of a specific antigen, trigger the clonal expansion and differentiation of B lymphocytes into immunoglobulins-secreting plasma cells. Secreted immunoglobulins mediate the effector phase of humoral immunity, which results in the elimination of bound antigens. The antigen binding site is formed by the variable domain of one heavy chain, together with that of its associated light chain. Thus, each immunoglobulin has two antigen binding sites with remarkable affinity for a particular antigen. The variable domains are assembled by a process called V-(D)-J rearrangement and can then be subjected to somatic hypermutations which, after exposure to antigen and selection, allow affinity maturation for a particular antigen. Mediates IgG effector functions on monocytes triggering ADCC of virus-infected cells. In Homo sapiens (Human), this protein is Immunoglobulin heavy constant gamma 1.